Consider the following 335-residue polypeptide: Holliday junction branch migration complex subunit RuvB (335 aa).

The tract at residues Met-1 to Tyr-181 is large ATPase domain (RuvB-L). ATP contacts are provided by residues Leu-20, Arg-21, Gly-62, Lys-65, Thr-66, Thr-67, Glu-128–Tyr-130, Arg-171, Tyr-181, and Arg-218. Thr-66 lines the Mg(2+) pocket. The interval Lys-182 to Gly-252 is small ATPAse domain (RuvB-S). The head domain (RuvB-H) stretch occupies residues Glu-255–Glu-335. DNA-binding residues include Arg-309 and Arg-314.

The protein belongs to the RuvB family. In terms of assembly, homohexamer. Forms an RuvA(8)-RuvB(12)-Holliday junction (HJ) complex. HJ DNA is sandwiched between 2 RuvA tetramers; dsDNA enters through RuvA and exits via RuvB. An RuvB hexamer assembles on each DNA strand where it exits the tetramer. Each RuvB hexamer is contacted by two RuvA subunits (via domain III) on 2 adjacent RuvB subunits; this complex drives branch migration. In the full resolvosome a probable DNA-RuvA(4)-RuvB(12)-RuvC(2) complex forms which resolves the HJ.

The protein localises to the cytoplasm. It carries out the reaction ATP + H2O = ADP + phosphate + H(+). Functionally, the RuvA-RuvB-RuvC complex processes Holliday junction (HJ) DNA during genetic recombination and DNA repair, while the RuvA-RuvB complex plays an important role in the rescue of blocked DNA replication forks via replication fork reversal (RFR). RuvA specifically binds to HJ cruciform DNA, conferring on it an open structure. The RuvB hexamer acts as an ATP-dependent pump, pulling dsDNA into and through the RuvAB complex. RuvB forms 2 homohexamers on either side of HJ DNA bound by 1 or 2 RuvA tetramers; 4 subunits per hexamer contact DNA at a time. Coordinated motions by a converter formed by DNA-disengaged RuvB subunits stimulates ATP hydrolysis and nucleotide exchange. Immobilization of the converter enables RuvB to convert the ATP-contained energy into a lever motion, pulling 2 nucleotides of DNA out of the RuvA tetramer per ATP hydrolyzed, thus driving DNA branch migration. The RuvB motors rotate together with the DNA substrate, which together with the progressing nucleotide cycle form the mechanistic basis for DNA recombination by continuous HJ branch migration. Branch migration allows RuvC to scan DNA until it finds its consensus sequence, where it cleaves and resolves cruciform DNA. The polypeptide is Holliday junction branch migration complex subunit RuvB (Campylobacter jejuni subsp. doylei (strain ATCC BAA-1458 / RM4099 / 269.97)).